Here is a 910-residue protein sequence, read N- to C-terminus: Alanine--tRNA ligase (910 aa).

The segment covering 488–505 (RHEEKKEDSKSEKGENTA) has biased composition (basic and acidic residues). Residues 488-507 (RHEEKKEDSKSEKGENTAEK) are disordered. His614, His618, Cys718, and His722 together coordinate Zn(2+).

Belongs to the class-II aminoacyl-tRNA synthetase family. Zn(2+) serves as cofactor.

Its subcellular location is the cytoplasm. The enzyme catalyses tRNA(Ala) + L-alanine + ATP = L-alanyl-tRNA(Ala) + AMP + diphosphate. Functionally, catalyzes the attachment of alanine to tRNA(Ala) in a two-step reaction: alanine is first activated by ATP to form Ala-AMP and then transferred to the acceptor end of tRNA(Ala). Also edits incorrectly charged Ser-tRNA(Ala) and Gly-tRNA(Ala) via its editing domain. The sequence is that of Alanine--tRNA ligase from Methanococcus aeolicus (strain ATCC BAA-1280 / DSM 17508 / OCM 812 / Nankai-3).